Consider the following 1067-residue polypeptide: Kinesin-like protein KIF11-B (1067 aa).

In terms of domain architecture, Kinesin motor spans 18–359 (NIQVVVRCRP…LDYANRAKSI (342 aa)). 105 to 112 (GQTGTGKT) is a binding site for ATP. Positions 365–480 (VNQKLTKKAL…SKEQLAQESF (116 aa)) form a coiled coil. At Thr937 the chain carries Phosphothreonine; by CDK1. Ser1046 is modified (phosphoserine; by NEK6).

This sequence belongs to the TRAFAC class myosin-kinesin ATPase superfamily. Kinesin family. BimC subfamily. Heterotetramer of two heavy and two light chains. Interacts with aurka. In terms of processing, phosphorylation of Thr-937 during mitosis controls the association of this protein with the spindle apparatus. A subset of this protein primarily localized at the spindle pole is phosphorylated by NEK6 during mitosis. Post-translationally, phosphorylated on a serine residue by aurka. As to expression, in unfertilized eggs, shows highest expression in the germinal vesicle and radial yolk-poor channels. Also present in testis.

The protein resides in the cytoplasm. The protein localises to the cytoskeleton. It localises to the spindle pole. Its function is as follows. Plus end-directed motor protein required for establishing a bipolar spindle. Associates with both interphase and spindle microtubules. May be involved in nuclear divisions taking place during the development of unfertilized eggs. Required in non-mitotic cells for transport of secretory proteins from the Golgi complex to the cell surface. This chain is Kinesin-like protein KIF11-B (kif11-b), found in Xenopus laevis (African clawed frog).